Consider the following 95-residue polypeptide: Protein TusB (95 aa).

Belongs to the DsrH/TusB family. In terms of assembly, heterohexamer, formed by a dimer of trimers. The hexameric TusBCD complex contains 2 copies each of TusB, TusC and TusD. The TusBCD complex interacts with TusE.

The protein localises to the cytoplasm. Its function is as follows. Part of a sulfur-relay system required for 2-thiolation of 5-methylaminomethyl-2-thiouridine (mnm(5)s(2)U) at tRNA wobble positions. This chain is Protein TusB, found in Escherichia coli (strain SMS-3-5 / SECEC).